A 612-amino-acid chain; its full sequence is Dihydroxy-acid dehydratase (612 aa).

Position 81 (D81) interacts with Mg(2+). Position 122 (C122) interacts with [2Fe-2S] cluster. Residues D123 and K124 each coordinate Mg(2+). K124 is subject to N6-carboxylysine. Residue C195 coordinates [2Fe-2S] cluster. Mg(2+) is bound at residue E491. S517 acts as the Proton acceptor in catalysis.

The protein belongs to the IlvD/Edd family. As to quaternary structure, homodimer. Requires [2Fe-2S] cluster as cofactor. It depends on Mg(2+) as a cofactor.

The enzyme catalyses (2R)-2,3-dihydroxy-3-methylbutanoate = 3-methyl-2-oxobutanoate + H2O. It catalyses the reaction (2R,3R)-2,3-dihydroxy-3-methylpentanoate = (S)-3-methyl-2-oxopentanoate + H2O. The protein operates within amino-acid biosynthesis; L-isoleucine biosynthesis; L-isoleucine from 2-oxobutanoate: step 3/4. Its pathway is amino-acid biosynthesis; L-valine biosynthesis; L-valine from pyruvate: step 3/4. In terms of biological role, functions in the biosynthesis of branched-chain amino acids. Catalyzes the dehydration of (2R,3R)-2,3-dihydroxy-3-methylpentanoate (2,3-dihydroxy-3-methylvalerate) into 2-oxo-3-methylpentanoate (2-oxo-3-methylvalerate) and of (2R)-2,3-dihydroxy-3-methylbutanoate (2,3-dihydroxyisovalerate) into 2-oxo-3-methylbutanoate (2-oxoisovalerate), the penultimate precursor to L-isoleucine and L-valine, respectively. This Bartonella tribocorum (strain CIP 105476 / IBS 506) protein is Dihydroxy-acid dehydratase.